Here is a 318-residue protein sequence, read N- to C-terminus: NADH-ubiquinone oxidoreductase chain 1 (318 aa).

Transmembrane regions (helical) follow at residues 2-22 (FLVN…FLTL), 70-90 (MFIM…TPLP), 100-120 (LGVL…LWSG), 140-160 (ISYE…SGSF), 172-192 (LWLI…TLAE), 217-237 (GGSF…MNAI), 253-273 (EFYT…FLWI), and 294-314 (LPLT…TASI).

This sequence belongs to the complex I subunit 1 family. Core subunit of respiratory chain NADH dehydrogenase (Complex I) which is composed of 45 different subunits.

It localises to the mitochondrion inner membrane. It catalyses the reaction a ubiquinone + NADH + 5 H(+)(in) = a ubiquinol + NAD(+) + 4 H(+)(out). Its function is as follows. Core subunit of the mitochondrial membrane respiratory chain NADH dehydrogenase (Complex I) which catalyzes electron transfer from NADH through the respiratory chain, using ubiquinone as an electron acceptor. Essential for the catalytic activity and assembly of complex I. The protein is NADH-ubiquinone oxidoreductase chain 1 (MT-ND1) of Emballonura alecto (Philippine sheath-tailed bat).